The chain runs to 339 residues: Ribosomal RNA large subunit methyltransferase F (339 aa).

Residues 1 to 26 (MTAPSTPKPQRKKPKTATTAKPVVPR) form a disordered region.

This sequence belongs to the methyltransferase superfamily. METTL16/RlmF family.

Its subcellular location is the cytoplasm. It carries out the reaction adenosine(1618) in 23S rRNA + S-adenosyl-L-methionine = N(6)-methyladenosine(1618) in 23S rRNA + S-adenosyl-L-homocysteine + H(+). Functionally, specifically methylates the adenine in position 1618 of 23S rRNA. The chain is Ribosomal RNA large subunit methyltransferase F from Pseudomonas fluorescens (strain SBW25).